The following is a 148-amino-acid chain: Large ribosomal subunit protein uL15 (148 aa).

The tract at residues 1–50 is disordered; it reads MNLSNLKPAEGSTKTRKRIGRGPGSGLGGTSTRGHKGAKSRSGYSKKIGF. The span at 21–31 shows a compositional bias: gly residues; that stretch reads RGPGSGLGGTS.

This sequence belongs to the universal ribosomal protein uL15 family. In terms of assembly, part of the 50S ribosomal subunit.

Its function is as follows. Binds to the 23S rRNA. The chain is Large ribosomal subunit protein uL15 from Bacteroides fragilis (strain ATCC 25285 / DSM 2151 / CCUG 4856 / JCM 11019 / LMG 10263 / NCTC 9343 / Onslow / VPI 2553 / EN-2).